The sequence spans 329 residues: DNA-directed RNA polymerase subunit alpha (329 aa).

Residues 1 to 235 (MQGSVTEFLK…EQLEAFVDLR (235 aa)) are alpha N-terminal domain (alpha-NTD). Residues 249–329 (FDPILLRPVD…NWPPASIADE (81 aa)) form an alpha C-terminal domain (alpha-CTD) region.

Belongs to the RNA polymerase alpha chain family. In terms of assembly, homodimer. The RNAP catalytic core consists of 2 alpha, 1 beta, 1 beta' and 1 omega subunit. When a sigma factor is associated with the core the holoenzyme is formed, which can initiate transcription.

The catalysed reaction is RNA(n) + a ribonucleoside 5'-triphosphate = RNA(n+1) + diphosphate. Functionally, DNA-dependent RNA polymerase catalyzes the transcription of DNA into RNA using the four ribonucleoside triphosphates as substrates. The sequence is that of DNA-directed RNA polymerase subunit alpha from Yersinia pestis bv. Antiqua (strain Antiqua).